The sequence spans 621 residues: Glucose 1,6-bisphosphate synthase (621 aa).

Positions 73 and 175 each coordinate alpha-D-glucose 1,6-bisphosphate. The active-site Phosphoserine intermediate is S175. 4 residues coordinate Mg(2+): S175, D332, D334, and D336. S175 carries the phosphoserine modification. Residues D336, R337, E433, S435, and K447 each contribute to the alpha-D-glucose 1,6-bisphosphate site.

Belongs to the phosphohexose mutase family. Expressed at highest levels in the brain and testis, at intermediate levels in thymus, spleen, lung and skeletal muscle, and at lowest levels in kidney, liver and heart.

The protein resides in the cytoplasm. The protein localises to the cytosol. It catalyses the reaction (2R)-3-phospho-glyceroyl phosphate + alpha-D-glucose 1-phosphate = alpha-D-glucose 1,6-bisphosphate + (2R)-3-phosphoglycerate + H(+). The enzyme catalyses alpha-D-glucose 6-phosphate + (2R)-3-phospho-glyceroyl phosphate = alpha-D-glucose 1,6-bisphosphate + (2R)-3-phosphoglycerate + H(+). It carries out the reaction (2R)-3-phospho-glyceroyl phosphate + alpha-D-ribose 1-phosphate = alpha-D-ribose 1,5-bisphosphate + (2R)-3-phosphoglycerate + H(+). The catalysed reaction is 2-deoxy-alpha-D-ribose 1-phosphate + (2R)-3-phospho-glyceroyl phosphate = 2-deoxy-alpha-D-ribose 1,5-bisphosphate + (2R)-3-phosphoglycerate + H(+). It catalyses the reaction (2R)-3-phospho-glyceroyl phosphate + alpha-D-mannose 1-phosphate = alpha-D-mannose 1,6-bisphosphate + (2R)-3-phosphoglycerate + H(+). Glucose 1,6-bisphosphate synthase using 1,3-bisphosphoglycerate as a phosphate donor and a series of 1-phosphate sugars, including glucose 1-phosphate, mannose 1-phosphate, ribose 1-phosphate and deoxyribose 1-phosphate, as acceptors. In vitro, also exhibits very low phosphopentomutase and phosphoglucomutase activity which are most probably not physiologically relevant. The chain is Glucose 1,6-bisphosphate synthase from Mus musculus (Mouse).